A 717-amino-acid polypeptide reads, in one-letter code: Polyribonucleotide nucleotidyltransferase (717 aa).

Residues D487 and D493 each coordinate Mg(2+). Residues P554 to I613 enclose the KH domain. Residues G623–R691 enclose the S1 motif domain.

It belongs to the polyribonucleotide nucleotidyltransferase family. Mg(2+) is required as a cofactor.

The protein resides in the cytoplasm. The enzyme catalyses RNA(n+1) + phosphate = RNA(n) + a ribonucleoside 5'-diphosphate. Functionally, involved in mRNA degradation. Catalyzes the phosphorolysis of single-stranded polyribonucleotides processively in the 3'- to 5'-direction. The polypeptide is Polyribonucleotide nucleotidyltransferase (Acidiphilium cryptum (strain JF-5)).